The following is a 356-amino-acid chain: Phosphate acyltransferase (356 aa).

The protein belongs to the PlsX family. In terms of assembly, homodimer. Probably interacts with PlsY.

The protein resides in the cytoplasm. It carries out the reaction a fatty acyl-[ACP] + phosphate = an acyl phosphate + holo-[ACP]. It participates in lipid metabolism; phospholipid metabolism. Its function is as follows. Catalyzes the reversible formation of acyl-phosphate (acyl-PO(4)) from acyl-[acyl-carrier-protein] (acyl-ACP). This enzyme utilizes acyl-ACP as fatty acyl donor, but not acyl-CoA. This chain is Phosphate acyltransferase, found in Shigella flexneri serotype 5b (strain 8401).